Consider the following 193-residue polypeptide: dCTP deaminase (193 aa).

DCTP contacts are provided by residues 110–115 (RSSLAR), Asp128, 136–138 (VLE), Tyr171, Lys178, and Gln182. Glu138 functions as the Proton donor/acceptor in the catalytic mechanism. Residues 169-193 (RPYNRRQDAKYKDQQGAVASRIDKD) are disordered.

Belongs to the dCTP deaminase family. In terms of assembly, homotrimer.

It carries out the reaction dCTP + H2O + H(+) = dUTP + NH4(+). It functions in the pathway pyrimidine metabolism; dUMP biosynthesis; dUMP from dCTP (dUTP route): step 1/2. Catalyzes the deamination of dCTP to dUTP. The sequence is that of dCTP deaminase from Pectobacterium carotovorum subsp. carotovorum (strain PC1).